Here is a 221-residue protein sequence, read N- to C-terminus: Thiamine-phosphate synthase (221 aa).

Residues 41-45 and Asn-82 each bind 4-amino-2-methyl-5-(diphosphooxymethyl)pyrimidine; that span reads QLRDK. Residues Asp-83 and Asp-102 each coordinate Mg(2+). Residue Ser-120 coordinates 4-amino-2-methyl-5-(diphosphooxymethyl)pyrimidine. 146–148 is a 2-[(2R,5Z)-2-carboxy-4-methylthiazol-5(2H)-ylidene]ethyl phosphate binding site; it reads TPT. 4-amino-2-methyl-5-(diphosphooxymethyl)pyrimidine is bound at residue Lys-149. 2-[(2R,5Z)-2-carboxy-4-methylthiazol-5(2H)-ylidene]ethyl phosphate is bound at residue Gly-177.

Belongs to the thiamine-phosphate synthase family. The cofactor is Mg(2+).

The enzyme catalyses 2-[(2R,5Z)-2-carboxy-4-methylthiazol-5(2H)-ylidene]ethyl phosphate + 4-amino-2-methyl-5-(diphosphooxymethyl)pyrimidine + 2 H(+) = thiamine phosphate + CO2 + diphosphate. The catalysed reaction is 2-(2-carboxy-4-methylthiazol-5-yl)ethyl phosphate + 4-amino-2-methyl-5-(diphosphooxymethyl)pyrimidine + 2 H(+) = thiamine phosphate + CO2 + diphosphate. It carries out the reaction 4-methyl-5-(2-phosphooxyethyl)-thiazole + 4-amino-2-methyl-5-(diphosphooxymethyl)pyrimidine + H(+) = thiamine phosphate + diphosphate. It participates in cofactor biosynthesis; thiamine diphosphate biosynthesis; thiamine phosphate from 4-amino-2-methyl-5-diphosphomethylpyrimidine and 4-methyl-5-(2-phosphoethyl)-thiazole: step 1/1. In terms of biological role, condenses 4-methyl-5-(beta-hydroxyethyl)thiazole monophosphate (THZ-P) and 2-methyl-4-amino-5-hydroxymethyl pyrimidine pyrophosphate (HMP-PP) to form thiamine monophosphate (TMP). This is Thiamine-phosphate synthase from Mycolicibacterium vanbaalenii (strain DSM 7251 / JCM 13017 / BCRC 16820 / KCTC 9966 / NRRL B-24157 / PYR-1) (Mycobacterium vanbaalenii).